The following is a 295-amino-acid chain: Trimeric intracellular cation channel type A (295 aa).

Topologically, residues 1 to 18 (MEVLDVLNLGEIAQYFSK) are lumenal. The helical transmembrane segment at 19 to 37 (MAMFPVFDVAYYIVSILYL) threads the bilayer. Residues 38 to 51 (KYEPGAVEVSRRSP) lie on the Cytoplasmic side of the membrane. Residues 52–75 (VASWLCAMLYCFGSYILADIMLGV) form a helical membrane-spanning segment. A Ca(2+)-binding site is contributed by Gly-74. The Lumenal portion of the chain corresponds to 76-86 (CPIDYFHNNSH). A helical transmembrane segment spans residues 87-106 (ILLASAVWYLIFFCPLNLFY). Over 107-144 (KCVAFMPVKLVLVALKEVVRTRKIAAGVHHAHHAYHHG) the chain is Cytoplasmic. The a 1,2-diacyl-sn-glycero-3-phospho-(1D-myo-inositol-4,5-bisphosphate) site is built by Lys-122 and Arg-126. Residues 145–162 (WLIMVITGYVKGSGVALM) traverse the membrane as a helical segment. Topologically, residues 163 to 182 (SNFEQLLRGVWKPETNEVLN) are lumenal. The helical transmembrane segment at 183 to 199 (MSFPTKASLYGAILFTL) threads the bilayer. At 200 to 210 (QEAHVLPVSKS) the chain is on the cytoplasmic side. The chain crosses the membrane as a helical span at residues 211 to 227 (TLICLFTLFMVSSKVFM). Residues 228 to 236 (TARHSHGSP) lie on the Lumenal side of the membrane. The chain crosses the membrane as a helical span at residues 237–255 (FALIESWVCHVLFGSPLGT). The Cytoplasmic segment spans residues 256-295 (EDAHDHHHAAPAAAPAPLSPAKNKEELSEGTRKRKSKKAE). Positions 259–295 (HDHHHAAPAAAPAPLSPAKNKEELSEGTRKRKSKKAE) are disordered. Positions 265–276 (APAAAPAPLSPA) are enriched in low complexity. The segment covering 277–286 (KNKEELSEGT) has biased composition (basic and acidic residues).

This sequence belongs to the TMEM38 family. Homotrimer; conformation seems to be controled by binding to diacylglycerol (DAG).

It is found in the sarcoplasmic reticulum membrane. The protein resides in the nucleus membrane. The enzyme catalyses K(+)(in) = K(+)(out). Channel activity is activated by a change of voltage within the sarcoplasmic reticulum lumen and blocked by luminal high Ca(2+) levels. Intracellular monovalent cation channel required for maintenance of rapid intracellular calcium release. Acts as a potassium counter-ion channel that functions in synchronization with calcium release from intracellular stores. Opened by a change of voltage within the sarcoplasmic reticulum lumen. The polypeptide is Trimeric intracellular cation channel type A (tmem38a) (Danio rerio (Zebrafish)).